The chain runs to 299 residues: Transcription elongation factor A protein 2 (299 aa).

The TFIIS N-terminal domain maps to Glu-5 to Ser-82. Residue Lys-57 forms a Glycyl lysine isopeptide (Lys-Gly) (interchain with G-Cter in ubiquitin) linkage. 2 positions are modified to phosphoserine: Ser-59 and Ser-100. Positions Ser-82–Thr-127 are disordered. Positions Arg-87–Lys-101 are enriched in polar residues. The span at Asp-102–Pro-116 shows a compositional bias: basic and acidic residues. The region spanning Val-138–Thr-254 is the TFIIS central domain. Residues Asp-257–Lys-297 form a TFIIS-type zinc finger. The Zn(2+) site is built by Cys-261, Cys-264, Cys-289, and Cys-292.

This sequence belongs to the TFS-II family. Interacts with the basal transcription factor GTF2B. Interacts with REXO1. Testis and ovary specific. Specific to testicular germ cells.

It is found in the nucleus. Its function is as follows. Necessary for efficient RNA polymerase II transcription elongation past template-encoded arresting sites. The arresting sites in DNA have the property of trapping a certain fraction of elongating RNA polymerases that pass through, resulting in locked ternary complexes. Cleavage of the nascent transcript by S-II allows the resumption of elongation from the new 3'-terminus. The polypeptide is Transcription elongation factor A protein 2 (Tcea2) (Mus musculus (Mouse)).